A 292-amino-acid polypeptide reads, in one-letter code: 33 kDa chaperonin (292 aa).

2 cysteine pairs are disulfide-bonded: cysteine 230–cysteine 232 and cysteine 263–cysteine 266.

Belongs to the HSP33 family. In terms of processing, under oxidizing conditions two disulfide bonds are formed involving the reactive cysteines. Under reducing conditions zinc is bound to the reactive cysteines and the protein is inactive.

It is found in the cytoplasm. In terms of biological role, redox regulated molecular chaperone. Protects both thermally unfolding and oxidatively damaged proteins from irreversible aggregation. Plays an important role in the bacterial defense system toward oxidative stress. This chain is 33 kDa chaperonin, found in Shigella dysenteriae serotype 1 (strain Sd197).